Consider the following 72-residue polypeptide: Small proline-rich protein 2A (72 aa).

The span at 1-11 (MSYQQQQCKQP) shows a compositional bias: low complexity. The segment at 1-20 (MSYQQQQCKQPCQPPPVCPT) is disordered. Repeat copies occupy residues 21-29 (PKCPEPCPP), 30-38 (PKCPEPCPP), and 39-47 (PKCPQPCPP). The segment at 21–47 (PKCPEPCPPPKCPEPCPPPKCPQPCPP) is 3 X 9 AA tandem repeats of P-K-C-P-[EQ]-P-C-P-P. The interval 42 to 72 (PQPCPPQQCQQKYPPVTPSPPCQSKYPPKSK) is disordered.

The protein belongs to the cornifin (SPRR) family. Forms five pairs of intrachain disulfide bonds. In terms of tissue distribution, expressed in intestine; selectively expressed in goblet cells.

Its subcellular location is the secreted. It localises to the extracellular space. The protein resides in the cytoplasmic vesicle. The protein localises to the secretory vesicle. Gut bactericidal protein that selectively kills Gram-positive bacteria by binding to negatively charged lipids on bacterial membranes, leading to bacterial membrane permeabilization and disruption. Specifically binds lipids bearing negatively charged headgroups, such as phosphatidic acid, phosphatidylserine (PS), cardiolipin (CL), and phosphatidylinositol phosphates, but not to zwitterionic or neutral lipids. Induced by type-2 cytokines in response to helminth infection and is required to protect against helminth-induced bacterial invasion of intestinal tissue. May also be involved in the development of the cornified envelope of squamous epithelia; however, additional evidences are required to confirm this result in vivo. This chain is Small proline-rich protein 2A, found in Homo sapiens (Human).